The following is a 179-amino-acid chain: Probable F-box protein At3g25550 (179 aa).

One can recognise an F-box domain in the interval 19-55; it reads IPNDDVLEEIIVRLPVKTLTRFQTVSKHWRHTIKSRN.

The sequence is that of Probable F-box protein At3g25550 from Arabidopsis thaliana (Mouse-ear cress).